We begin with the raw amino-acid sequence, 693 residues long: Sodium-dependent dopamine transporter (693 aa).

Over 1–56 (MSEGRCSVAHMSSVVAPAKEANAMGPKAVELVLVKEQNGVQLTNSTLLNPPQSPTE) the chain is Cytoplasmic. A discontinuously helical membrane pass occupies residues 57 to 95 (AQDRETWSKKADFLLSVIGFAVDLANVWRFPYLCYKNGG). Residues glycine 75, alanine 77, valine 78, aspartate 79, and asparagine 82 each coordinate Na(+). Position 79 (aspartate 79) interacts with dopamine. 2 consecutive transmembrane segments (helical) span residues 96-127 (GAFLVPYLFFMVVAGVPLFYMELALGQFNREG) and 128-171 (AAGV…LSSF). Residues serine 149 and glycine 153 each coordinate dopamine. At 172-233 (TTELPWTHCN…SQGIDDLGPP (62 aa)) the chain is on the extracellular side. Cysteine 180 and cysteine 189 are disulfide-bonded. Residues asparagine 181, asparagine 196, and asparagine 202 are each glycosylated (N-linked (GlcNAc...) asparagine). Transmembrane regions (helical) follow at residues 234-253 (RWQLTSCLVLVIVLLYFSLW) and 254-284 (KGVKTSGKVVWITATMPYVVLFALLLRGITL). Residues 285 to 303 (PGAVDAIRAYLSVDFHRLC) lie on the Extracellular side of the membrane. Residues 304–332 (EASVWIDAAIQICFSLGVGLGVLIAFSSY) traverse the membrane as a discontinuously helical segment. Chloride is bound at residue glutamine 314. Phenylalanine 317 is a binding site for dopamine. Residues serine 318 and asparagine 350 each contribute to the Na(+) site. Position 318 (serine 318) interacts with chloride. Residues 333 to 373 (NKFTNNCYRDAIITTSVNSLTSFSSGFVVFSFLGYMAQKHS) traverse the membrane as a helical segment. A chloride-binding site is contributed by serine 354. Residues 374–397 (VPIGDVAKDGPGLIFIIYPEALAT) lie on the Extracellular side of the membrane. The next 3 helical transmembrane spans lie at 398–439 (LPLS…QLLH), 440–463 (RHRELFTLLVVLATFLLSLFCVTN), and 464–496 (GGIYVFTLLDHFAAGTSILFGVLMEVIGVAWFY). Residues leucine 415, aspartate 418, and serine 419 each contribute to the Na(+) site. 2 residues coordinate dopamine: serine 419 and alanine 420. Topologically, residues 497 to 513 (GVWQFSDDIKQMTGRRP) are cytoplasmic. A helical transmembrane segment spans residues 514 to 539 (SLYWRLCWKFVSPCFLLFVVVVSIAT). Residues 540 to 550 (FRPPHYGAYVF) are Extracellular-facing. Residues 551-580 (PEWATALGWAIAASSMSVVPIYAAYKLCSL) form a helical membrane-spanning segment. An interaction with TGFB1I1 region spans residues 558–587 (GWAIAASSMSVVPIYAAYKLCSLPGSSREK). The Cytoplasmic portion of the chain corresponds to 581-693 (PGSSREKLAY…VESTGLCSVY (113 aa)).

This sequence belongs to the sodium:neurotransmitter symporter (SNF) (TC 2.A.22) family. SLC6A3 subfamily. Monomer. Homooligomer; disulfide-linked. Interacts with PRKCABP and TGFB1I1. Interacts (via N-terminus) with SYNGR3 (via N-terminus). Interacts with SLC18A2. Interacts with TOR1A (ATP-bound); TOR1A regulates SLC6A3 subcellular location. Interacts with alpha-synuclein/SNCA. Interacts with SEPTIN4. In terms of tissue distribution, expressed in the neurons of the substantia nigra of the brain.

Its subcellular location is the cell membrane. It is found in the cell projection. The protein localises to the neuron projection. It localises to the axon. The catalysed reaction is dopamine(out) + chloride(out) + Na(+)(out) = dopamine(in) + chloride(in) + Na(+)(in). It carries out the reaction (R)-noradrenaline(out) + chloride(out) + Na(+)(out) = (R)-noradrenaline(in) + chloride(in) + Na(+)(in). The enzyme catalyses dopamine(out) + chloride(out) + 2 Na(+)(out) = dopamine(in) + chloride(in) + 2 Na(+)(in). Inhibited by GBR 12909 dihydrochloride, amphetamine and cocaine. Inhibited by zinc ions. Functionally, mediates sodium- and chloride-dependent transport of dopamine. Also mediates sodium- and chloride-dependent transport of norepinephrine (also known as noradrenaline). Regulator of light-dependent retinal hyaloid vessel regression, downstream of OPN5 signaling. The polypeptide is Sodium-dependent dopamine transporter (SLC6A3) (Bos taurus (Bovine)).